The chain runs to 460 residues: Putative glycoside/cation symporter YagG (460 aa).

Over 1–9 the chain is Cytoplasmic; sequence MTQLTMKDK. Helical transmembrane passes span 10–30 and 31–51; these read IGYG…MFLL and AYFY…LFLV. Over 52–78 the chain is Cytoplasmic; that stretch reads SRVLDAVTDPLMGLLVDRTRTRHGQFR. A helical transmembrane segment spans residues 79-99; the sequence is PFLLWGAIPFGIVCVLTFYTP. The Periplasmic segment spans residues 100-106; sequence DFSAQGK. The helical transmembrane segment at 107–127 threads the bilayer; that stretch reads IIYACVTYILLTLVYTFVNVP. The Cytoplasmic portion of the chain corresponds to 128 to 150; sequence YCAMPGVITADPKERHALQSWRF. The helical transmembrane segment at 151–171 threads the bilayer; the sequence is FLAAAGSLAISGIALPLVSII. Residues 172–179 are Periplasmic-facing; the sequence is GKGDEQVG. Residues 180-200 form a helical membrane-spanning segment; that stretch reads YFGAMCVLGLSGVVLLYVCFF. The Cytoplasmic portion of the chain corresponds to 201–262; that stretch reads TTKERYTFEV…FVKYVMDHPE (62 aa). The chain crosses the membrane as a helical span at residues 263–283; that stretch reads LATQFLLYGSLATMFGSLCSS. Over 284–308 the chain is Periplasmic; it reads RLLGRFDRVTAFKWIIVAYSLISLL. Residues 309–329 traverse the membrane as a helical segment; it reads IFVTPAEHIALIFALNILFLF. At 330–366 the chain is on the cytoplasmic side; it reads VFNTTTPLQWLMASDVVDYEESRSGRRLDGLVFSTYL. The chain crosses the membrane as a helical span at residues 367–387; it reads FSLKIGLAIGGAVVGWILAYV. Topologically, residues 388 to 405 are periplasmic; sequence NYSASSSVQPVEVLTTIK. The helical transmembrane segment at 406-426 threads the bilayer; it reads ILFCVVPVVLYAGMFIMLSLY. Over 427–460 the chain is Cytoplasmic; it reads KLTDARVEAISRQLIKHRAAQGEAVPDAATAASH.

This sequence belongs to the sodium:galactoside symporter (TC 2.A.2) family.

The protein resides in the cell inner membrane. In Escherichia coli (strain K12), this protein is Putative glycoside/cation symporter YagG (yagG).